The following is a 470-amino-acid chain: Pyruvate kinase I (470 aa).

A substrate-binding site is contributed by Arg32. Residues Asn34, Ser36, Asp66, and Thr67 each contribute to the K(+) site. 34–37 lines the ATP pocket; it reads NFSH. ATP is bound at residue Arg73. Residue Lys76 is modified to N6-acetyllysine. Lys156 contributes to the ATP binding site. Glu222 contacts Mg(2+). 3 residues coordinate substrate: Gly245, Asp246, and Thr278. Residue Asp246 participates in Mg(2+) binding. At Lys319 the chain carries N6-acetyllysine.

It belongs to the pyruvate kinase family. In terms of assembly, homotetramer. The cofactor is Mg(2+). Requires K(+) as cofactor.

The enzyme catalyses pyruvate + ATP = phosphoenolpyruvate + ADP + H(+). It participates in carbohydrate degradation; glycolysis; pyruvate from D-glyceraldehyde 3-phosphate: step 5/5. The protein is Pyruvate kinase I (pykF) of Escherichia coli O157:H7.